Here is a 281-residue protein sequence, read N- to C-terminus: MNIVNTIKDVKLIIKKWKDENLSIGYVPTMGYLHEGHASLIKKAREENDKVIVSIFVNPIQFGPKEDYSTYPRDLVKDSSLCEKFGVDLIFNPETSEMYPNKIYSHINVDILTENLCGEKRPGHFQGVCTVLTKFFNILNPTKAYLGEKDAQQLAVVRKMVEDLNFPIEIIGCPIIREEDGLAKSSRNAYLNKQERKSALILNKSLKEALNALESGEKNSNNIRDIIVSKLNKEPLAKIDYVSIVDSITLQSVEKIQSSILVAIAVYIGKTRLIDNFTFKL.

Position 30–37 (30–37) interacts with ATP; sequence MGYLHEGH. Histidine 37 (proton donor) is an active-site residue. Glutamine 61 provides a ligand contact to (R)-pantoate. A beta-alanine-binding site is contributed by glutamine 61. 147–150 serves as a coordination point for ATP; that stretch reads GEKD. Glutamine 153 lines the (R)-pantoate pocket. ATP contacts are provided by residues isoleucine 176 and 184–187; that span reads KSSR.

Belongs to the pantothenate synthetase family. In terms of assembly, homodimer.

Its subcellular location is the cytoplasm. The catalysed reaction is (R)-pantoate + beta-alanine + ATP = (R)-pantothenate + AMP + diphosphate + H(+). It participates in cofactor biosynthesis; (R)-pantothenate biosynthesis; (R)-pantothenate from (R)-pantoate and beta-alanine: step 1/1. Catalyzes the condensation of pantoate with beta-alanine in an ATP-dependent reaction via a pantoyl-adenylate intermediate. The sequence is that of Pantothenate synthetase from Clostridium botulinum (strain Okra / Type B1).